We begin with the raw amino-acid sequence, 444 residues long: 23S rRNA (uracil(1939)-C(5))-methyltransferase RlmD (444 aa).

In terms of domain architecture, TRAM spans 5 to 67; that stretch reads RNRLDRTPFQ…RHFDEAKTVG (63 aa). The [4Fe-4S] cluster site is built by Cys80, Cys86, Cys89, and Cys168. Gln276, Phe305, Asn310, Glu326, Asp353, and Asp374 together coordinate S-adenosyl-L-methionine. The active-site Nucleophile is Cys400.

It belongs to the class I-like SAM-binding methyltransferase superfamily. RNA M5U methyltransferase family. RlmD subfamily.

It carries out the reaction uridine(1939) in 23S rRNA + S-adenosyl-L-methionine = 5-methyluridine(1939) in 23S rRNA + S-adenosyl-L-homocysteine + H(+). Catalyzes the formation of 5-methyl-uridine at position 1939 (m5U1939) in 23S rRNA. The sequence is that of 23S rRNA (uracil(1939)-C(5))-methyltransferase RlmD from Xanthomonas axonopodis pv. citri (strain 306).